The following is a 140-amino-acid chain: Large ribosomal subunit protein bL17 (140 aa).

Belongs to the bacterial ribosomal protein bL17 family. In terms of assembly, part of the 50S ribosomal subunit. Contacts protein L32.

This Rhizobium rhizogenes (strain K84 / ATCC BAA-868) (Agrobacterium radiobacter) protein is Large ribosomal subunit protein bL17.